The chain runs to 68 residues: Pleurocidin-like peptide WF4 (68 aa).

Residues 1–22 (MKFTATFLMMFIFVLMVEPGEC) form the signal peptide. Positions 48–68 (GEQQDLDKRAVDEDPNVIVFE) are excised as a propeptide.

The protein belongs to the pleurocidin family.

The protein localises to the secreted. In terms of biological role, antimicrobial peptide. This Pseudopleuronectes americanus (Winter flounder) protein is Pleurocidin-like peptide WF4 (ple4).